A 759-amino-acid chain; its full sequence is Secretin XpsD (759 aa).

A signal peptide spans 1 to 21 (MSERMTPRLFPVSLLIGLLAG). Cysteine 22 is lipidated: N-palmitoyl cysteine. Cysteine 22 carries the S-diacylglycerol cysteine lipid modification. The span at 40-51 (VGAAGATQTTAE) shows a compositional bias: low complexity. Residues 40-69 (VGAAGATQTTAEQRADGNASAKPTPVIRRG) are disordered. The segment at 92–187 (GSATFNFEGE…APSTASPSAA (96 aa)) is N0. The interval 189–253 (GFEVRVVPLK…VQIFDVDWLS (65 aa)) is N1. The N2 stretch occupies residues 254-323 (GMSVGVFPIQ…IQQWLDRIDS (70 aa)). An N3 region spans residues 326-474 (GGVRLFSYEL…SIRDVIEKLD (149 aa)). The interval 352–434 (GGRGNGGNSG…PPSTNQNGSV (83 aa)) is disordered. Over residues 392-401 (ATGGDIGGTS) the composition is skewed to gly residues. Polar residues predominate over residues 425–434 (PPSTNQNGSV). The segment at 479-734 (QVHIEAQIAE…VLITPSIVRN (256 aa)) is secretin. The interval 736-759 (QDARDLTDEYGSKFKSMRPMDVHK) is s domain.

This sequence belongs to the bacterial secretin family. GSP D subfamily. In terms of assembly, forms a cylindrical channel with 15 subunits. Binds to XpsN.

The protein localises to the cell outer membrane. Functionally, involved in a type II secretion system (T2SS, formerly general secretion pathway, GSP) for the export of proteins. This subunit forms the outer membrane channel. In Xanthomonas campestris pv. campestris (strain ATCC 33913 / DSM 3586 / NCPPB 528 / LMG 568 / P 25), this protein is Secretin XpsD (xpsD).